The primary structure comprises 570 residues: Methyl-coenzyme M reductase subunit alpha (570 aa).

Q161 is a coenzyme F430 binding site. Residues R239, 270-271 (KH), and R284 each bind coenzyme B. H271 is modified (pros-methylhistidine). Residue R285 is modified to 5-methylarginine. Y346 and F464 together coordinate coenzyme M. G465 is modified (1-thioglycine). D470 is modified ((Z)-2,3-didehydroaspartate). Position 472 is an S-methylcysteine (C472).

This sequence belongs to the methyl-coenzyme M reductase alpha subunit family. As to quaternary structure, MCR is a hexamer of two alpha, two beta, and two gamma chains, forming a dimer of heterotrimers. Coenzyme F430 is required as a cofactor. The alpha subunit contains five modified amino acids near the active site region. Is methylated on His-271, Arg-285 and Cys-472, probably by the action of specific S-adenosylmethionine-dependent methyltransferases. Also contains a thioglycine at position 465, forming a thiopeptide bond. Contains a didehydroaspartate residue at position 470. The methylation on C5 of Arg-285 is a post-translational methylation not essential in vivo, but which plays a role for the stability and structural integrity of MCR. Does not show a methylation at Gln-420, as shown for M.marburgensis.

The protein localises to the cytoplasm. It carries out the reaction coenzyme B + methyl-coenzyme M = methane + coenzyme M-coenzyme B heterodisulfide. It participates in one-carbon metabolism; methyl-coenzyme M reduction; methane from methyl-coenzyme M: step 1/1. Its function is as follows. Component of the methyl-coenzyme M reductase (MCR) I that catalyzes the reductive cleavage of methyl-coenzyme M (CoM-S-CH3 or 2-(methylthio)ethanesulfonate) using coenzyme B (CoB or 7-mercaptoheptanoylthreonine phosphate) as reductant which results in the production of methane and the mixed heterodisulfide of CoB and CoM (CoM-S-S-CoB). This is the final step in methanogenesis. The sequence is that of Methyl-coenzyme M reductase subunit alpha (mcrA) from Methanosarcina barkeri (strain Fusaro / DSM 804).